The primary structure comprises 190 residues: Threonylcarbamoyl-AMP synthase (190 aa).

One can recognise a YrdC-like domain in the interval 7-190; sequence GDAIAAAIDV…ALTGELFRQG (184 aa).

This sequence belongs to the SUA5 family. TsaC subfamily.

It localises to the cytoplasm. The catalysed reaction is L-threonine + hydrogencarbonate + ATP = L-threonylcarbamoyladenylate + diphosphate + H2O. Required for the formation of a threonylcarbamoyl group on adenosine at position 37 (t(6)A37) in tRNAs that read codons beginning with adenine. Catalyzes the conversion of L-threonine, HCO(3)(-)/CO(2) and ATP to give threonylcarbamoyl-AMP (TC-AMP) as the acyladenylate intermediate, with the release of diphosphate. The sequence is that of Threonylcarbamoyl-AMP synthase from Escherichia coli O157:H7.